The primary structure comprises 370 residues: 4-hydroxy-3-methylbut-2-en-1-yl diphosphate synthase (flavodoxin) (370 aa).

Residues cysteine 270, cysteine 273, cysteine 305, and glutamate 312 each coordinate [4Fe-4S] cluster.

Belongs to the IspG family. [4Fe-4S] cluster is required as a cofactor.

It carries out the reaction (2E)-4-hydroxy-3-methylbut-2-enyl diphosphate + oxidized [flavodoxin] + H2O + 2 H(+) = 2-C-methyl-D-erythritol 2,4-cyclic diphosphate + reduced [flavodoxin]. Its pathway is isoprenoid biosynthesis; isopentenyl diphosphate biosynthesis via DXP pathway; isopentenyl diphosphate from 1-deoxy-D-xylulose 5-phosphate: step 5/6. Converts 2C-methyl-D-erythritol 2,4-cyclodiphosphate (ME-2,4cPP) into 1-hydroxy-2-methyl-2-(E)-butenyl 4-diphosphate. The chain is 4-hydroxy-3-methylbut-2-en-1-yl diphosphate synthase (flavodoxin) from Azotobacter vinelandii (strain DJ / ATCC BAA-1303).